We begin with the raw amino-acid sequence, 445 residues long: Ribosomal protein uS12 methylthiotransferase RimO (445 aa).

The MTTase N-terminal domain maps to 10–120; it reads PKVGFVSLGC…VVNAVHEVVP (111 aa). [4Fe-4S] cluster contacts are provided by Cys-19, Cys-55, Cys-84, Cys-153, Cys-157, and Cys-160. In terms of domain architecture, Radical SAM core spans 139 to 378; that stretch reads LTPRHYAYLK…AHQQAISSAR (240 aa). A TRAM domain is found at 380 to 445; the sequence is QLRIGREIEV…DEYDLWAEQI (66 aa).

Belongs to the methylthiotransferase family. RimO subfamily. [4Fe-4S] cluster is required as a cofactor.

Its subcellular location is the cytoplasm. It catalyses the reaction L-aspartate(89)-[ribosomal protein uS12]-hydrogen + (sulfur carrier)-SH + AH2 + 2 S-adenosyl-L-methionine = 3-methylsulfanyl-L-aspartate(89)-[ribosomal protein uS12]-hydrogen + (sulfur carrier)-H + 5'-deoxyadenosine + L-methionine + A + S-adenosyl-L-homocysteine + 2 H(+). In terms of biological role, catalyzes the methylthiolation of an aspartic acid residue of ribosomal protein uS12. In Pseudomonas fluorescens (strain Pf0-1), this protein is Ribosomal protein uS12 methylthiotransferase RimO.